The following is a 459-amino-acid chain: Nuclear hormone receptor family member nhr-11 (459 aa).

Residues glycine 2–serine 81 constitute a DNA-binding region (nuclear receptor). 2 consecutive NR C4-type zinc fingers follow at residues cysteine 5–cysteine 26 and cysteine 42–cysteine 69. 2 disordered regions span residues arginine 90 to aspartate 119 and aspartate 134 to aspartate 162. The segment covering asparagine 97 to proline 115 has biased composition (low complexity). An NR LBD domain is found at glutamate 188 to glutamine 458.

This sequence belongs to the nuclear hormone receptor family.

Its subcellular location is the nucleus. Functionally, orphan nuclear receptor. The polypeptide is Nuclear hormone receptor family member nhr-11 (nhr-11) (Caenorhabditis elegans).